The sequence spans 124 residues: Small ribosomal subunit protein uS12 (124 aa).

Positions 1–22 (MATVNQLVRKPRKRKVAKSDVP) are disordered. Asp89 is modified (3-methylthioaspartic acid). The disordered stretch occupies residues 99 to 124 (RGSLDTSGVQNRKQGRSKYGTKRPKK). Residues 111 to 124 (KQGRSKYGTKRPKK) are compositionally biased toward basic residues.

It belongs to the universal ribosomal protein uS12 family. As to quaternary structure, part of the 30S ribosomal subunit. Contacts proteins S8 and S17. May interact with IF1 in the 30S initiation complex.

In terms of biological role, with S4 and S5 plays an important role in translational accuracy. Its function is as follows. Interacts with and stabilizes bases of the 16S rRNA that are involved in tRNA selection in the A site and with the mRNA backbone. Located at the interface of the 30S and 50S subunits, it traverses the body of the 30S subunit contacting proteins on the other side and probably holding the rRNA structure together. The combined cluster of proteins S8, S12 and S17 appears to hold together the shoulder and platform of the 30S subunit. This is Small ribosomal subunit protein uS12 from Marinomonas sp. (strain MWYL1).